Here is a 234-residue protein sequence, read N- to C-terminus: 3-deoxy-manno-octulosonate cytidylyltransferase (234 aa).

The protein belongs to the KdsB family.

The protein localises to the cytoplasm. It catalyses the reaction 3-deoxy-alpha-D-manno-oct-2-ulosonate + CTP = CMP-3-deoxy-beta-D-manno-octulosonate + diphosphate. It functions in the pathway nucleotide-sugar biosynthesis; CMP-3-deoxy-D-manno-octulosonate biosynthesis; CMP-3-deoxy-D-manno-octulosonate from 3-deoxy-D-manno-octulosonate and CTP: step 1/1. It participates in bacterial outer membrane biogenesis; lipopolysaccharide biosynthesis. In terms of biological role, activates KDO (a required 8-carbon sugar) for incorporation into bacterial lipopolysaccharide in Gram-negative bacteria. This is 3-deoxy-manno-octulosonate cytidylyltransferase from Aquifex aeolicus (strain VF5).